A 316-amino-acid polypeptide reads, in one-letter code: Epiphycan (316 aa).

The first 23 residues, M1–T23, serve as a signal peptide directing secretion. O-linked (Xyl...) (dermatan sulfate) serine glycosylation is present at S98. Residues V100–K137 enclose the LRRNT domain. C112 and C124 are disulfide-bonded. LRR repeat units follow at residues N138–N159, N162–R183, Q186–L207, E232–E252, S253–K274, and A284–Y304. C273 and C306 are oxidised to a cystine. N-linked (GlcNAc...) asparagine glycosylation occurs at N296.

Belongs to the small leucine-rich proteoglycan (SLRP) family. SLRP class III subfamily. Post-translationally, the O-linked glycosaminoglycan chain(s) are dermatan sulfate. As to expression, preferentially expressed in flattened chondrocytes of developing chick limb cartilage. Also found in the cartilage peripheral zone bordering with bone marrow cavity.

Its subcellular location is the secreted. The protein resides in the extracellular space. It localises to the extracellular matrix. May have a role in bone formation and also in establishing the ordered structure of cartilage through matrix organization. This is Epiphycan (EPYC) from Gallus gallus (Chicken).